The chain runs to 364 residues: Nucleoporin SEH1 (364 aa).

WD repeat units lie at residues 10 to 49 (DHKD…EWNC), 55 to 96 (THSG…SNDK), 111 to 152 (DSRT…NLSQ), 160 to 210 (SCKL…RKYA), 217 to 258 (TVTD…KESS), and 275 to 314 (GHNS…NWKC). The segment at 326–364 (NGAAGQAGTPGAAGTPGGPASQNALQAVAGRKKAQLMPG) is disordered. Residues 327 to 338 (GAAGQAGTPGAA) are compositionally biased toward low complexity. The segment covering 355-364 (GRKKAQLMPG) has biased composition (basic residues).

Belongs to the WD repeat SEC13 family. As to quaternary structure, component of the Nup107-160 subcomplex of the nuclear pore complex (NPC). The Nup107-160 subcomplex includes NUP160, NUP133, NUP107, NUP98, NUP85, NUP43, NUP37, SEH1 and SEC13. Component of the GATOR2 subcomplex, composed of MIOS, SEC13, SEH1L, WDR24 and WDR59. The GATOR2 complex interacts with CASTOR1 and CASTOR2; the interaction is negatively regulated by arginine. The GATOR2 complex interacts with SESN1, SESN2 and SESN3; the interaction is negatively regulated by amino acids.

Its subcellular location is the chromosome. It localises to the centromere. The protein resides in the kinetochore. It is found in the nucleus. The protein localises to the nuclear pore complex. Its subcellular location is the lysosome membrane. With respect to regulation, the GATOR2 complex is negatively regulated by the upstream amino acid sensors CASTOR1 and SESN2, which sequester the GATOR2 complex in absence of amino acids. In the presence of abundant amino acids, GATOR2 is released from CASTOR1 and SESN2 and activated. Functionally, component of the Nup107-160 subcomplex of the nuclear pore complex (NPC). The Nup107-160 subcomplex is required for the assembly of a functional NPC. The Nup107-160 subcomplex is also required for normal kinetochore microtubule attachment, mitotic progression and chromosome segregation. This subunit plays a role in recruitment of the Nup107-160 subcomplex to the kinetochore. In terms of biological role, as a component of the GATOR2 complex, functions as an activator of the amino acid-sensing branch of the mTORC1 signaling pathway. The GATOR2 complex indirectly activates mTORC1 through the inhibition of the GATOR1 subcomplex. GATOR2 probably acts as an E3 ubiquitin-protein ligase toward GATOR1. In the presence of abundant amino acids, the GATOR2 complex mediates ubiquitination of the NPRL2 core component of the GATOR1 complex, leading to GATOR1 inactivation. In the absence of amino acids, GATOR2 is inhibited, activating the GATOR1 complex. This Osmerus mordax (Rainbow smelt) protein is Nucleoporin SEH1 (seh1l).